The chain runs to 72 residues: MSKEDSFEMEGTVVDTLPNTMFRVELENGHVVTAHISGKMRKNYIRILTGDKVRVELTPYDLSKGRITYRAR.

One can recognise an S1-like domain in the interval 1-72 (MSKEDSFEME…SKGRITYRAR (72 aa)).

Belongs to the IF-1 family. In terms of assembly, component of the 30S ribosomal translation pre-initiation complex which assembles on the 30S ribosome in the order IF-2 and IF-3, IF-1 and N-formylmethionyl-tRNA(fMet); mRNA recruitment can occur at any time during PIC assembly.

The protein resides in the cytoplasm. Functionally, one of the essential components for the initiation of protein synthesis. Stabilizes the binding of IF-2 and IF-3 on the 30S subunit to which N-formylmethionyl-tRNA(fMet) subsequently binds. Helps modulate mRNA selection, yielding the 30S pre-initiation complex (PIC). Upon addition of the 50S ribosomal subunit IF-1, IF-2 and IF-3 are released leaving the mature 70S translation initiation complex. This is Translation initiation factor IF-1 from Pseudomonas savastanoi pv. phaseolicola (strain 1448A / Race 6) (Pseudomonas syringae pv. phaseolicola (strain 1448A / Race 6)).